The following is a 354-amino-acid chain: Phospho-N-acetylmuramoyl-pentapeptide-transferase (354 aa).

Helical transmembrane passes span 23–43, 66–86, 88–108, 138–158, 161–181, 193–213, 227–247, 257–277, 282–302, and 331–351; these read IAFF…IAWA, TPTM…LLCS, LTNT…FIGF, FALS…FIPF, YALF…ITAS, GLAS…VYLC, VVGV…ILGF, VFMG…TGVV, ILLI…ILQV, and KIIV…LTTL.

This sequence belongs to the glycosyltransferase 4 family. MraY subfamily. Requires Mg(2+) as cofactor.

The protein resides in the cell inner membrane. It carries out the reaction UDP-N-acetyl-alpha-D-muramoyl-L-alanyl-gamma-D-glutamyl-meso-2,6-diaminopimeloyl-D-alanyl-D-alanine + di-trans,octa-cis-undecaprenyl phosphate = di-trans,octa-cis-undecaprenyl diphospho-N-acetyl-alpha-D-muramoyl-L-alanyl-D-glutamyl-meso-2,6-diaminopimeloyl-D-alanyl-D-alanine + UMP. It functions in the pathway cell wall biogenesis; peptidoglycan biosynthesis. Functionally, catalyzes the initial step of the lipid cycle reactions in the biosynthesis of the cell wall peptidoglycan: transfers peptidoglycan precursor phospho-MurNAc-pentapeptide from UDP-MurNAc-pentapeptide onto the lipid carrier undecaprenyl phosphate, yielding undecaprenyl-pyrophosphoryl-MurNAc-pentapeptide, known as lipid I. This is Phospho-N-acetylmuramoyl-pentapeptide-transferase from Campylobacter hominis (strain ATCC BAA-381 / DSM 21671 / CCUG 45161 / LMG 19568 / NCTC 13146 / CH001A).